The following is a 326-amino-acid chain: N-acetyl-gamma-glutamyl-phosphate reductase (326 aa).

Cys-155 is a catalytic residue.

It belongs to the NAGSA dehydrogenase family. Type 1 subfamily.

It localises to the cytoplasm. It catalyses the reaction N-acetyl-L-glutamate 5-semialdehyde + phosphate + NADP(+) = N-acetyl-L-glutamyl 5-phosphate + NADPH + H(+). It functions in the pathway amino-acid biosynthesis; L-arginine biosynthesis; N(2)-acetyl-L-ornithine from L-glutamate: step 3/4. In terms of biological role, catalyzes the NADPH-dependent reduction of N-acetyl-5-glutamyl phosphate to yield N-acetyl-L-glutamate 5-semialdehyde. In Shewanella sediminis (strain HAW-EB3), this protein is N-acetyl-gamma-glutamyl-phosphate reductase.